Consider the following 328-residue polypeptide: MSFRREKFIEFGGPDGGNGGNGGSVIFVASSAVNTLLYFRYNQHIRAENGKAGSGKGKFGAAGRNRVVEVPVGTQLYDEDGNTLIADLNNIGQQYTVAAGGRGGIGNAQYKSSTNRAPTYFTYGTLGEEHCVLLKLKIVSDVGIIGMPNAGKSSLLSRCTASKTKVSDYPFTTLEPHLGVAYANGCELVLADIPGLIENASSGAGLGHKFLKHIERCVILLHLVDCSLPDIVSAYELVRQELKLHSQELAGKQEVVILNKCDLLSEGEVREKQKLLESSTKKEVITLSMGDELDSLIVFLHAQVKKAVVTEPSDTSFDPFLYVHYNKK.

The 139-residue stretch at 1-139 (MSFRREKFIE…HCVLLKLKIV (139 aa)) folds into the Obg domain. One can recognise an OBG-type G domain in the interval 140–309 (SDVGIIGMPN…LHAQVKKAVV (170 aa)). GTP is bound by residues 146 to 153 (GMPNAGKS), 171 to 175 (FTTLE), 192 to 195 (DIPG), 259 to 262 (NKCD), and 290 to 292 (GDE). Positions 153 and 173 each coordinate Mg(2+).

The protein belongs to the TRAFAC class OBG-HflX-like GTPase superfamily. OBG GTPase family. Monomer. Requires Mg(2+) as cofactor.

The protein resides in the cytoplasm. Functionally, an essential GTPase which binds GTP, GDP and possibly (p)ppGpp with moderate affinity, with high nucleotide exchange rates and a fairly low GTP hydrolysis rate. Plays a role in control of the cell cycle, stress response, ribosome biogenesis and in those bacteria that undergo differentiation, in morphogenesis control. This Anaplasma marginale (strain St. Maries) protein is GTPase Obg 2.